The following is a 338-amino-acid chain: Ketol-acid reductoisomerase (NADP(+)) (338 aa).

The 181-residue stretch at 1 to 181 (MQVYYDKDCD…GGGRSGIIET (181 aa)) folds into the KARI N-terminal Rossmann domain. Residues 24 to 27 (YGSQ), R47, S50, S52, and 82 to 85 (DEFQ) contribute to the NADP(+) site. The active site involves H107. Residue G133 participates in NADP(+) binding. One can recognise a KARI C-terminal knotted domain in the interval 182–327 (TFKDETETDL…GKLRAMMPWI (146 aa)). The Mg(2+) site is built by D190, E194, E226, and E230. S251 lines the substrate pocket.

The protein belongs to the ketol-acid reductoisomerase family. Requires Mg(2+) as cofactor.

It carries out the reaction (2R)-2,3-dihydroxy-3-methylbutanoate + NADP(+) = (2S)-2-acetolactate + NADPH + H(+). It catalyses the reaction (2R,3R)-2,3-dihydroxy-3-methylpentanoate + NADP(+) = (S)-2-ethyl-2-hydroxy-3-oxobutanoate + NADPH + H(+). The protein operates within amino-acid biosynthesis; L-isoleucine biosynthesis; L-isoleucine from 2-oxobutanoate: step 2/4. It participates in amino-acid biosynthesis; L-valine biosynthesis; L-valine from pyruvate: step 2/4. Involved in the biosynthesis of branched-chain amino acids (BCAA). Catalyzes an alkyl-migration followed by a ketol-acid reduction of (S)-2-acetolactate (S2AL) to yield (R)-2,3-dihydroxy-isovalerate. In the isomerase reaction, S2AL is rearranged via a Mg-dependent methyl migration to produce 3-hydroxy-3-methyl-2-ketobutyrate (HMKB). In the reductase reaction, this 2-ketoacid undergoes a metal-dependent reduction by NADPH to yield (R)-2,3-dihydroxy-isovalerate. The sequence is that of Ketol-acid reductoisomerase (NADP(+)) from Saccharophagus degradans (strain 2-40 / ATCC 43961 / DSM 17024).